The sequence spans 608 residues: Elongation factor 4 (608 aa).

A tr-type G domain is found at 11 to 193 (KKIRNFSIIA…QIVEKVPEPS (183 aa)). GTP contacts are provided by residues 23-28 (DHGKST) and 140-143 (NKID).

Belongs to the TRAFAC class translation factor GTPase superfamily. Classic translation factor GTPase family. LepA subfamily.

It is found in the cell membrane. It catalyses the reaction GTP + H2O = GDP + phosphate + H(+). Required for accurate and efficient protein synthesis under certain stress conditions. May act as a fidelity factor of the translation reaction, by catalyzing a one-codon backward translocation of tRNAs on improperly translocated ribosomes. Back-translocation proceeds from a post-translocation (POST) complex to a pre-translocation (PRE) complex, thus giving elongation factor G a second chance to translocate the tRNAs correctly. Binds to ribosomes in a GTP-dependent manner. The chain is Elongation factor 4 from Listeria monocytogenes serotype 4b (strain CLIP80459).